The following is a 359-amino-acid chain: Oplophorus-luciferin 2-monooxygenase non-catalytic subunit (359 aa).

Residues methionine 1–asparagine 39 form the signal peptide. LRR repeat units lie at residues alanine 135–glutamine 158, threonine 160–serine 180, aspartate 181–threonine 203, serine 228–leucine 251, glycine 255–glycine 278, glutamine 280–proline 300, leucine 302–isoleucine 325, and leucine 331–alanine 356.

As to quaternary structure, heterotetramer of a catalytic 19 kDa and a non-catalytic 35 kDa subunit.

Its subcellular location is the secreted. Its function is as follows. Non-catalytic subunit of oplophorus-luciferin 2-monooxygenase. May stabilize the active conformation of the catalytic subunit. In Oplophorus gracilirostris (Luminous shrimp), this protein is Oplophorus-luciferin 2-monooxygenase non-catalytic subunit.